The sequence spans 115 residues: Holo-[acyl-carrier-protein] synthase (115 aa).

2 residues coordinate Mg(2+): Asp6 and Glu51.

The protein belongs to the P-Pant transferase superfamily. AcpS family. The cofactor is Mg(2+).

The protein resides in the cytoplasm. The catalysed reaction is apo-[ACP] + CoA = holo-[ACP] + adenosine 3',5'-bisphosphate + H(+). Functionally, transfers the 4'-phosphopantetheine moiety from coenzyme A to a Ser of acyl-carrier-protein. In Campylobacter jejuni subsp. doylei (strain ATCC BAA-1458 / RM4099 / 269.97), this protein is Holo-[acyl-carrier-protein] synthase.